The primary structure comprises 46 residues: Large ribosomal subunit protein bL34 (46 aa).

It belongs to the bacterial ribosomal protein bL34 family.

This is Large ribosomal subunit protein bL34 from Synechococcus sp. (strain JA-2-3B'a(2-13)) (Cyanobacteria bacterium Yellowstone B-Prime).